Consider the following 365-residue polypeptide: Endophilin-B1 (365 aa).

Methionine 1 carries the post-translational modification N-acetylmethionine. The segment at 1–30 is membrane-binding amphipathic helix; sequence MNIMDFNVKKLAADAGTFLSRAVQFTEEKL. The segment at 1 to 37 is required for membrane binding; that stretch reads MNIMDFNVKKLAADAGTFLSRAVQFTEEKLGQAEKTE. Residues 27–261 form the BAR domain; it reads EEKLGQAEKT…LGSFPSNYLS (235 aa). The residue at position 145 (threonine 145) is a Phosphothreonine; by CDK5. A coiled-coil region spans residues 155 to 195; that stretch reads YKTIAKERKLLQNKRLDLDAAKTRLKKAKAAETRNSSEQEL. Residues 305-365 form the SH3 domain; sequence SGSRKARVLY…VPITYLELLN (61 aa).

This sequence belongs to the endophilin family. As to quaternary structure, homodimer, and heterodimer with SH3GLB2. Binds BAX; induction of apoptosis augments BAX binding. Binds DNM1, HTT, AMPH, BIN1 and ARFGAP1. Interacts with UVRAG; UVRAG bridges the interaction to BECN1 indicative for an association with the PI3K complex II (PI3KC3-C2). In terms of processing, phosphorylated at Thr-145 by CDK5; this phosphorylation is required for autophagy induction in starved neurons and facilitates homodimerization. As to expression, highly expressed in heart, skeletal muscle, kidney and placenta. Detected at lower levels in brain, colon, thymus, spleen, liver, small intestine, lung and peripheral blood leukocytes.

Its subcellular location is the cytoplasm. It is found in the golgi apparatus membrane. The protein localises to the mitochondrion outer membrane. The protein resides in the cytoplasmic vesicle. It localises to the autophagosome membrane. Its subcellular location is the midbody. May be required for normal outer mitochondrial membrane dynamics. Required for coatomer-mediated retrograde transport in certain cells. May recruit other proteins to membranes with high curvature. May promote membrane fusion. Involved in activation of caspase-dependent apoptosis by promoting BAX/BAK1 activation. Isoform 1 acts proapoptotic in fibroblasts. Involved in caspase-independent apoptosis during nutrition starvation and involved in the regulation of autophagy. Activates lipid kinase activity of PIK3C3 during autophagy probably by associating with the PI3K complex II (PI3KC3-C2). Associated with PI3KC3-C2 during autophagy may regulate the trafficking of ATG9A from the Golgi complex to the peripheral cytoplasm for the formation of autophagosomes by inducing Golgi membrane tubulation and fragmentation. Involved in regulation of degradative endocytic trafficking and cytokinesis, probably in the context of PI3KC3-C2. Isoform 2 acts antiapoptotic in neuronal cells; involved in maintenance of mitochondrial morphology and promotes neuronal viability. This chain is Endophilin-B1 (SH3GLB1), found in Homo sapiens (Human).